Reading from the N-terminus, the 217-residue chain is Glycerol-3-phosphate acyltransferase (217 aa).

A run of 6 helical transmembrane segments spans residues 3-23 (IVILLLVAYLLGSIPSGVWIG), 56-76 (VLLMDILKGTLATSLPYLFGL), 78-98 (GVNPLFFGVAAVLGHTFPIFA), 120-140 (FFIYSALIFVICLYLTSMVSL), 142-162 (SMISAVLITLSTIILPFTVPA), and 163-183 (ILPTFNWLLTVIAIALTTFIF).

Belongs to the PlsY family. As to quaternary structure, probably interacts with PlsX.

It localises to the cell membrane. The catalysed reaction is an acyl phosphate + sn-glycerol 3-phosphate = a 1-acyl-sn-glycero-3-phosphate + phosphate. Its pathway is lipid metabolism; phospholipid metabolism. Catalyzes the transfer of an acyl group from acyl-phosphate (acyl-PO(4)) to glycerol-3-phosphate (G3P) to form lysophosphatidic acid (LPA). This enzyme utilizes acyl-phosphate as fatty acyl donor, but not acyl-CoA or acyl-ACP. This chain is Glycerol-3-phosphate acyltransferase, found in Enterococcus faecalis (strain ATCC 700802 / V583).